The following is a 130-amino-acid chain: Leptin receptor gene-related protein (130 aa).

The next 4 helical transmembrane spans lie at 7 to 27, 32 to 52, 68 to 88, and 99 to 119; these read LVAL…GCAL, QYWP…NLIA, LAYF…VVLA, and GLVM…FLIF.

The protein belongs to the OB-RGRP/VPS55 family.

It localises to the golgi apparatus membrane. It is found in the endosome membrane. Functionally, involved in protein trafficking. May be involved in the down-regulation of membrane protein levels. The polypeptide is Leptin receptor gene-related protein (leprot) (Danio rerio (Zebrafish)).